The sequence spans 298 residues: Probable aspartoacylase (298 aa).

Residues histidine 13 and glutamate 16 each coordinate Zn(2+). Residues arginine 54 and 61–62 each bind substrate; that span reads NR. Zn(2+) is bound at residue histidine 103. 2 residues coordinate substrate: glutamate 161 and tyrosine 271.

This sequence belongs to the AspA/AstE family. Aspartoacylase subfamily. The cofactor is Zn(2+).

The catalysed reaction is an N-acyl-L-aspartate + H2O = a carboxylate + L-aspartate. The polypeptide is Probable aspartoacylase (Prochlorococcus marinus (strain MIT 9515)).